We begin with the raw amino-acid sequence, 782 residues long: MSSASNNGPSADQSVQDLQMEVERLTRELDQVSSASAQSAQYGLSLLEEKSALQQKCEELETLYDNTRHELDITQEALTKFQTSQKVTNKTGIEQEDALLNESAARETSLNLQIFDLENELKQLRHELERVRNERDRMLQENSDFGRDKSDSEADRLRLKSELKDLKFRETRMLSEYSELEEENISLQKQVSSLRSSQVEFEGAKHEIRRLTEEVELLNQQVDELANLKKIAEKQMEEALETLQGEREAKYALKKELDGHLNRESMYHISNLAYSIRSNMEDNASNNSDGEEENLALKRLEADLSTELKSPDGTKCDLFSEIHLNELKKLEKQLESMESEKTHLTANLREAQTSLDKSQNELQNFMSRLALLAAHVDALVQLKKQIDVKEQGKEGGQKKDELEQQLRALISQYANWFTLSAKEIDGLKTDIAELQKGLNYTDATTTLRNEVTNLKNKLLATEQKSLDLQSDVQTLTHISQNAGQSLGSARSTLVALSDDLAQLYHLVCTVNGETPTRVLLDHKTDDMSFENDSLTAIQSQFKSDVFIAKPQIVEDLQGLADSVEIKKYVDTVSDQIKYLKTAVEHTIDMNKHKIRSEGGDALEKVNTEEMEELQEQIVKLKSLLSVKREQIGTLRNVLKSNKQTAEVALTNLKSKYENEKIIVSDTMSKLRNELRLLKEDAATFSSLRAMFAARCEEYVTQVDDLNRQLEAAEEEKKTLNQLLRLAVQQKLALTQRLEEMEMDREMRHVRRPMPAQRGTSGKSSFSTRPSSRNPASSNANPF.

Residues 15-77 (VQDLQMEVER…RHELDITQEA (63 aa)) adopt a coiled-coil conformation. Residue Ser103 is modified to Phosphoserine. Residues 107–249 (ETSLNLQIFD…LETLQGEREA (143 aa)) adopt a coiled-coil conformation. Residues Ser285, Ser288, and Ser305 each carry the phosphoserine modification. Thr306 is modified (phosphothreonine). Ser310 is modified (phosphoserine). Coiled-coil stretches lie at residues 320–368 (SEIH…FMSR) and 444–477 (TTTLRNEVTNLKNKLLATEQKSLDLQSDVQTLTH). Phosphoserine is present on Ser528. Coiled-coil stretches lie at residues 603–630 (EKVNTEEMEELQEQIVKLKSLLSVKREQ) and 695–743 (CEEY…MEMD). The interval 699–722 (VTQVDDLNRQLEAAEEEKKTLNQL) is interaction with Rab6. Residues 744 to 782 (REMRHVRRPMPAQRGTSGKSSFSTRPSSRNPASSNANPF) are disordered. Over residues 757–767 (RGTSGKSSFST) the composition is skewed to polar residues. Residues 768 to 782 (RPSSRNPASSNANPF) are compositionally biased toward low complexity.

It belongs to the BicD family. May homodimerize but does not interact with BicDR. Interacts (via C-terminal domain) with Rab6. In ovaries, expressed in oocyte and nurse cells.

Its subcellular location is the cytoplasm. It localises to the cytoskeleton. This protein is essential for differentiation. It may play a role in localizing of Nanos (a maternal determinant) activity in oocytes. Functions redundantly with BicDR. During oogenesis, plays a specific role, together with Rab6 but independently of Sec5, in the polarization of the oocyte microtubule cytoskeleton, in oskar mRNA localization and in the anterodorsal secretion of grk. Plays a role in the biogenesis of annulate lamellae containing nuclear pore complex components. During macrochaetae development, together with BicDR, involved in Rab 6 and Spn-F stability and distribution and actin cytoskeleton organization. The sequence is that of Protein bicaudal D from Drosophila melanogaster (Fruit fly).